The primary structure comprises 236 residues: MAQAGRTGYDNREIVMKYIHYKLSQRGYEWDVGDVDAAPLGAAPTPGIFSFQPESNPTPAVHRDMAARTSPLRPIVATTGPTLSPVPPVVHLTLRRAGDDFSRRYRRDFAEMSSQLHLTPFTARGRFATVVEELFRDGVNWGRIVAFFEFGGVMCVESVNREMSPLVDNIALWMTEYLNRHLHTWIQDNGGWDAFVELYGPSVRPLFDFSWLSLKTLLSLALVGACITLGTYLGHK.

The BH4 motif lies at Asp-10–Trp-30. Thr-69 bears the Phosphothreonine; by MAPK8 mark. Ser-70 is modified (phosphoserine; by MAPK8 and PKC). A Phosphoserine; by MAPK8 modification is found at Ser-84. The BH3 motif lies at Val-90 to Arg-104. A BH1 motif is present at residues Glu-133–Gly-152. Positions Thr-184 to Tyr-199 match the BH2 motif. The chain crosses the membrane as a helical span at residues Phe-209–Gly-230.

This sequence belongs to the Bcl-2 family. Forms homodimers, and heterodimers with BAX, BAD, BAK and Bcl-X(L). Heterodimerization with BAX requires intact BH1 and BH2 motifs, and is necessary for anti-apoptotic activity. Component of the complex, at least composed of LRPPRC, BECN1 and BCL2; the interactions prevent BECN1 from forming an autophagy-inducing complex with PIK3C3. Interacts with EI24. Also interacts with APAF1, BBC3, BCL2L1, BNIPL, MRPL41 and TP53BP2. Binding to FKBP8 seems to target BCL2 to the mitochondria and probably interferes with the binding of BCL2 to its targets. Interacts with BAG1 in an ATP-dependent manner. Interacts with RAF1 (the 'Ser-338' and 'Ser-339' phosphorylated form). Interacts (via the BH4 domain) with EGLN3; the interaction prevents the formation of the BAX-BCL2 complex and inhibits the anti-apoptotic activity of BCL2. Interacts with G0S2; this interaction also prevents the formation of the anti-apoptotic BAX-BCL2 complex. Interacts with RTL10/BOP. Interacts with the SCF(FBXO10) complex. Interacts (via the loop between motifs BH4 and BH3) with NLRP1 (via LRR repeats), but not with NLRP2, NLRP3, NLRP4, PYCARD, nor MEFV. Interacts with GIMAP3/IAN4, GIMAP4/IAN1 and GIMAP5/IAN5. Interacts with BCAP31. Interacts with IRF3; the interaction is inhibited by Sendai virus infection. Interacts with BECN1; thereby inhibiting autophagy in non-starvation conditions. Interacts with AMBRA1; thereby inhibiting autophagy. In terms of processing, phosphorylation/dephosphorylation on Ser-70 regulates anti-apoptotic activity. Growth factor-stimulated phosphorylation on Ser-70 by PKC is required for the anti-apoptosis activity and occurs during the G2/M phase of the cell cycle. In the absence of growth factors, BCL2 appears to be phosphorylated by other protein kinases such as ERKs and stress-activated kinases. Phosphorylated by MAPK8/JNK1 at Thr-69, Ser-70 and Ser-84, which stimulates starvation-induced autophagy. Dephosphorylated by protein phosphatase 2A (PP2A). Post-translationally, proteolytically cleaved by caspases during apoptosis. The cleaved protein, lacking the BH4 motif, has pro-apoptotic activity, causes the release of cytochrome c into the cytosol promoting further caspase activity. Monoubiquitinated by PRKN, leading to an increase in its stability. Ubiquitinated by SCF(FBXO10), leading to its degradation by the proteasome.

The protein localises to the mitochondrion outer membrane. Its subcellular location is the nucleus membrane. The protein resides in the endoplasmic reticulum membrane. It localises to the cytoplasm. Its function is as follows. Suppresses apoptosis in a variety of cell systems including factor-dependent lymphohematopoietic and neural cells. Regulates cell death by controlling the mitochondrial membrane permeability. Appears to function in a feedback loop system with caspases. Inhibits caspase activity either by preventing the release of cytochrome c from the mitochondria and/or by binding to the apoptosis-activating factor (APAF-1). Also acts as an inhibitor of autophagy: interacts with BECN1 and AMBRA1 during non-starvation conditions and inhibits their autophagy function. May attenuate inflammation by impairing NLRP1-inflammasome activation, hence CASP1 activation and IL1B release. In Cricetulus griseus (Chinese hamster), this protein is Apoptosis regulator Bcl-2 (BCL2).